The primary structure comprises 111 residues: Ribonuclease P protein component (111 aa).

Belongs to the RnpA family. In terms of assembly, consists of a catalytic RNA component (M1 or rnpB) and a protein subunit.

It carries out the reaction Endonucleolytic cleavage of RNA, removing 5'-extranucleotides from tRNA precursor.. Its function is as follows. RNaseP catalyzes the removal of the 5'-leader sequence from pre-tRNA to produce the mature 5'-terminus. It can also cleave other RNA substrates such as 4.5S RNA. The protein component plays an auxiliary but essential role in vivo by binding to the 5'-leader sequence and broadening the substrate specificity of the ribozyme. The protein is Ribonuclease P protein component of Alkaliphilus metalliredigens (strain QYMF).